The sequence spans 352 residues: Phosphoribosylformylglycinamidine cyclo-ligase (352 aa).

Belongs to the AIR synthase family.

The protein resides in the cytoplasm. The enzyme catalyses 2-formamido-N(1)-(5-O-phospho-beta-D-ribosyl)acetamidine + ATP = 5-amino-1-(5-phospho-beta-D-ribosyl)imidazole + ADP + phosphate + H(+). The protein operates within purine metabolism; IMP biosynthesis via de novo pathway; 5-amino-1-(5-phospho-D-ribosyl)imidazole from N(2)-formyl-N(1)-(5-phospho-D-ribosyl)glycinamide: step 2/2. The polypeptide is Phosphoribosylformylglycinamidine cyclo-ligase (Pseudomonas fluorescens (strain Pf0-1)).